Consider the following 80-residue polypeptide: Acyl carrier protein (80 aa).

Positions 2–77 constitute a Carrier domain; the sequence is SDTLKRLQKI…DALNYIENKI (76 aa). Position 37 is an O-(pantetheine 4'-phosphoryl)serine (Ser-37).

Belongs to the acyl carrier protein (ACP) family. Post-translationally, 4'-phosphopantetheine is transferred from CoA to a specific serine of apo-ACP by AcpS. This modification is essential for activity because fatty acids are bound in thioester linkage to the sulfhydryl of the prosthetic group.

The protein resides in the plastid. It is found in the chloroplast. The protein operates within lipid metabolism; fatty acid biosynthesis. In terms of biological role, carrier of the growing fatty acid chain in fatty acid biosynthesis. The chain is Acyl carrier protein from Cylindrotheca sp. (strain N1) (Marine diatom).